A 158-amino-acid chain; its full sequence is Large ribosomal subunit protein uL30 (158 aa).

Belongs to the universal ribosomal protein uL30 family. Part of the 50S ribosomal subunit.

In Saccharolobus islandicus (strain Y.G.57.14 / Yellowstone #1) (Sulfolobus islandicus), this protein is Large ribosomal subunit protein uL30.